The chain runs to 401 residues: Argininosuccinate synthase (401 aa).

ATP is bound at residue 8 to 16 (AYSGGLDTS). Position 86 (Tyr86) interacts with L-citrulline. Gly116 contacts ATP. Residues Thr118, Asn122, and Asp123 each coordinate L-aspartate. Asn122 contributes to the L-citrulline binding site. L-citrulline-binding residues include Arg126, Ser174, Glu258, and Tyr270.

It belongs to the argininosuccinate synthase family. Type 1 subfamily. Homotetramer.

The protein localises to the cytoplasm. The catalysed reaction is L-citrulline + L-aspartate + ATP = 2-(N(omega)-L-arginino)succinate + AMP + diphosphate + H(+). Its pathway is amino-acid biosynthesis; L-arginine biosynthesis; L-arginine from L-ornithine and carbamoyl phosphate: step 2/3. This Acidothermus cellulolyticus (strain ATCC 43068 / DSM 8971 / 11B) protein is Argininosuccinate synthase.